A 195-amino-acid chain; its full sequence is 3-isopropylmalate dehydratase small subunit (195 aa).

The protein belongs to the LeuD family. LeuD type 1 subfamily. As to quaternary structure, heterodimer of LeuC and LeuD.

It catalyses the reaction (2R,3S)-3-isopropylmalate = (2S)-2-isopropylmalate. The protein operates within amino-acid biosynthesis; L-leucine biosynthesis; L-leucine from 3-methyl-2-oxobutanoate: step 2/4. Its function is as follows. Catalyzes the isomerization between 2-isopropylmalate and 3-isopropylmalate, via the formation of 2-isopropylmaleate. The protein is 3-isopropylmalate dehydratase small subunit of Corynebacterium kroppenstedtii (strain DSM 44385 / JCM 11950 / CIP 105744 / CCUG 35717).